The primary structure comprises 299 residues: Tyrosine recombinase XerC (299 aa).

Residues 1 to 85 (MERQLEAYCA…AVRGLYRYLN (85 aa)) enclose the Core-binding (CB) domain. The 180-residue stretch at 106 to 285 (RLPKVLDTDR…DFQHLAAVYD (180 aa)) folds into the Tyr recombinase domain. Active-site residues include Arg146, Lys170, His237, Arg240, and His263. Catalysis depends on Tyr272, which acts as the O-(3'-phospho-DNA)-tyrosine intermediate.

This sequence belongs to the 'phage' integrase family. XerC subfamily. As to quaternary structure, forms a cyclic heterotetrameric complex composed of two molecules of XerC and two molecules of XerD.

Its subcellular location is the cytoplasm. Functionally, site-specific tyrosine recombinase, which acts by catalyzing the cutting and rejoining of the recombining DNA molecules. The XerC-XerD complex is essential to convert dimers of the bacterial chromosome into monomers to permit their segregation at cell division. It also contributes to the segregational stability of plasmids. This chain is Tyrosine recombinase XerC, found in Pseudomonas putida (strain W619).